We begin with the raw amino-acid sequence, 573 residues long: 60 kDa heat shock protein, mitochondrial (573 aa).

Residues 1 to 26 (MLRLPAVLRQIRPVSRALAPHLTRAY) constitute a mitochondrion transit peptide. ATP-binding positions include lysine 75 and 111 to 115 (DGTTT). At tyrosine 227 the chain carries Phosphotyrosine. Residues glycine 440 and aspartate 520 each contribute to the ATP site.

It is found in the mitochondrion matrix. The enzyme catalyses ATP + H2O + a folded polypeptide = ADP + phosphate + an unfolded polypeptide.. In terms of biological role, chaperonin implicated in mitochondrial protein import and macromolecular assembly. Together with Hsp10, facilitates the correct folding of imported proteins. May also prevent misfolding and promote the refolding and proper assembly of unfolded polypeptides generated under stress conditions in the mitochondrial matrix. The functional units of these chaperonins consist of heptameric rings of the large subunit Hsp60, which function as a back-to-back double ring. In a cyclic reaction, Hsp60 ring complexes bind one unfolded substrate protein per ring, followed by the binding of ATP and association with 2 heptameric rings of the co-chaperonin Hsp10. This leads to sequestration of the substrate protein in the inner cavity of Hsp60 where, for a certain period of time, it can fold undisturbed by other cell components. Synchronous hydrolysis of ATP in all Hsp60 subunits results in the dissociation of the chaperonin rings and the release of ADP and the folded substrate protein. The chain is 60 kDa heat shock protein, mitochondrial from Gallus gallus (Chicken).